The primary structure comprises 470 residues: Putative ankyrin repeat protein L279 (470 aa).

4 ANK repeats span residues 119-148 (RDDY…NPGT), 149-178 (NKYA…GSDK), 372-401 (ETQG…NVNE), and 403-431 (NGKP…DISL).

This Acanthamoeba polyphaga (Amoeba) protein is Putative ankyrin repeat protein L279.